The following is a 63-amino-acid chain: MSKGTPSFGKHNKGKTHIRCRRCGRHSFNVRKGYCVACGFGRSKRMRRYSWQNKKSWTRVRLK.

Zn(2+) contacts are provided by cysteine 20, cysteine 23, cysteine 35, and cysteine 38. A C4-type zinc finger spans residues 20-38 (CRRCGRHSFNVRKGYCVAC).

It belongs to the eukaryotic ribosomal protein eL37 family. Requires Zn(2+) as cofactor.

Functionally, binds to the 23S rRNA. In Ignicoccus hospitalis (strain KIN4/I / DSM 18386 / JCM 14125), this protein is Large ribosomal subunit protein eL37.